We begin with the raw amino-acid sequence, 157 residues long: Large ribosomal subunit protein uL3 (157 aa).

Positions 57–98 are disordered; the sequence is GKGFAGSIKRHNQSRGPESHGSRYHRRPGSMGPIKGKLKGKK.

This sequence belongs to the universal ribosomal protein uL3 family. Part of the 50S ribosomal subunit. Forms a cluster with proteins L14 and L19.

Its function is as follows. One of the primary rRNA binding proteins, it binds directly near the 3'-end of the 23S rRNA, where it nucleates assembly of the 50S subunit. In Onion yellows phytoplasma (strain OY-M), this protein is Large ribosomal subunit protein uL3 (rplC).